The following is a 92-amino-acid chain: UPF0250 protein Smlt4048 (92 aa).

This sequence belongs to the UPF0250 family.

This is UPF0250 protein Smlt4048 from Stenotrophomonas maltophilia (strain K279a).